Here is a 457-residue protein sequence, read N- to C-terminus: Siroheme synthase (457 aa).

A precorrin-2 dehydrogenase /sirohydrochlorin ferrochelatase region spans residues 1–204 (MDHLPIFCQL…NDQKAITETT (204 aa)). NAD(+) contacts are provided by residues 22-23 (DV) and 43-44 (LA). A Phosphoserine modification is found at S128. Positions 216–457 (GEVVLVGAGP…RDKLNWFSNH (242 aa)) are uroporphyrinogen-III C-methyltransferase. P225 contributes to the S-adenosyl-L-methionine binding site. D248 (proton acceptor) is an active-site residue. The active-site Proton donor is K270. S-adenosyl-L-methionine is bound by residues 301-303 (GGD), I306, 331-332 (TA), M382, and G411.

In the N-terminal section; belongs to the precorrin-2 dehydrogenase / sirohydrochlorin ferrochelatase family. It in the C-terminal section; belongs to the precorrin methyltransferase family.

The catalysed reaction is uroporphyrinogen III + 2 S-adenosyl-L-methionine = precorrin-2 + 2 S-adenosyl-L-homocysteine + H(+). It catalyses the reaction precorrin-2 + NAD(+) = sirohydrochlorin + NADH + 2 H(+). It carries out the reaction siroheme + 2 H(+) = sirohydrochlorin + Fe(2+). It functions in the pathway cofactor biosynthesis; adenosylcobalamin biosynthesis; precorrin-2 from uroporphyrinogen III: step 1/1. The protein operates within cofactor biosynthesis; adenosylcobalamin biosynthesis; sirohydrochlorin from precorrin-2: step 1/1. Its pathway is porphyrin-containing compound metabolism; siroheme biosynthesis; precorrin-2 from uroporphyrinogen III: step 1/1. It participates in porphyrin-containing compound metabolism; siroheme biosynthesis; siroheme from sirohydrochlorin: step 1/1. It functions in the pathway porphyrin-containing compound metabolism; siroheme biosynthesis; sirohydrochlorin from precorrin-2: step 1/1. Functionally, multifunctional enzyme that catalyzes the SAM-dependent methylations of uroporphyrinogen III at position C-2 and C-7 to form precorrin-2 via precorrin-1. Then it catalyzes the NAD-dependent ring dehydrogenation of precorrin-2 to yield sirohydrochlorin. Finally, it catalyzes the ferrochelation of sirohydrochlorin to yield siroheme. This chain is Siroheme synthase, found in Escherichia coli O17:K52:H18 (strain UMN026 / ExPEC).